The following is a 406-amino-acid chain: Arginine deiminase (406 aa).

The Amidino-cysteine intermediate role is filled by C396.

It belongs to the arginine deiminase family.

The protein resides in the cytoplasm. It carries out the reaction L-arginine + H2O = L-citrulline + NH4(+). The protein operates within amino-acid degradation; L-arginine degradation via ADI pathway; carbamoyl phosphate from L-arginine: step 1/2. The sequence is that of Arginine deiminase from Salmonella typhimurium (strain LT2 / SGSC1412 / ATCC 700720).